The sequence spans 308 residues: Probable very-long-chain enoyl-CoA reductase art-1 (308 aa).

Positions 7–85 constitute a Ubiquitin-like domain; that stretch reads VYDAKRTDNL…VLYVRDLGPQ (79 aa). The next 4 membrane-spanning stretches (helical) occupy residues 112–132, 169–189, 194–214, and 255–275; these read FIYGQAAVNATMHPAVQIAFF, WGFAAFVAYFVNHPLFTPPAF, VYFGLAGFVISEFGNLSIHIL, and WIFFSIMVQSLPAIIFTTAGF.

This sequence belongs to the steroid 5-alpha reductase family.

Its subcellular location is the endoplasmic reticulum membrane. It carries out the reaction a very-long-chain 2,3-saturated fatty acyl-CoA + NADP(+) = a very-long-chain (2E)-enoyl-CoA + NADPH + H(+). The protein operates within lipid metabolism; fatty acid biosynthesis. Functionally, catalyzes the last of the four reactions of the long-chain fatty acids elongation cycle. This endoplasmic reticulum-bound enzymatic process, allows the addition of 2 carbons to the chain of long- and very long-chain fatty acids/VLCFAs per cycle. This enzyme reduces the trans-2,3-enoyl-CoA fatty acid intermediate to an acyl-CoA that can be further elongated by entering a new cycle of elongation. Thereby, it participates in the production of VLCFAs of different chain lengths that are involved in multiple biological processes as precursors of membrane lipids and lipid mediators. This is Probable very-long-chain enoyl-CoA reductase art-1 (art-1) from Caenorhabditis elegans.